Reading from the N-terminus, the 573-residue chain is MAVPVIETNNIISHPEGGCPLQVGEGTYHLKDNLHLATPPPHPSEAPIVNPNPLATVPTPPTMGVKLSLICISPRTKTPSSLPNQTVVAPPFGDGNPALAPVPVKDGLKRRKPKNNIIKSSSSFVSRVITHEAATKRLNDRSPEGLFAFANINRAFQWLDLSSKQKEEPLTKILFTKAHMLCHDTNELTKSSSHIDIVMGSSAGDIIWYEPMSQKYARINKNGVVSNSPVTHIKWIPGSENLFMAAHANGQLAVYDKEKEDALFTPEIQNQSAEALKASGRQPLQVLKSVNSRNQKTNPVALWKLANQRISHFAFSPDQRHLAVVLEDGSLRVMDYLKEEVLDIFRSYYGGLICVCWSPDGKYIVTGGQDDLLTIWSLPERKIVARCQGHNSWVSAVAFDPWRCDERTYRFGSVGDDCRLLLWDFSVGMLHRPKVYQASARQRTSMITSNTQYGNRHRADSASNRMRSDSQKTANTYESCDQAVRHPVEPRARTALLPPIMSKVVGSDPICWLGFQEDCIMTSSLEGHIRTWDRPREGISDKYNDQSSSPAISASATGSGSVSGLADSNTGLS.

WD repeat units lie at residues 225 to 265, 305 to 346, 347 to 386, and 389 to 433; these read VSNS…ALFT, LANQ…DIFR, SYYGGLICVCWSPDGKYIVTGGQDDLLTIWSLPERKIVAR, and GHNS…LHRP. Disordered regions lie at residues 448 to 481 and 537 to 573; these read TSNTQYGNRHRADSASNRMRSDSQKTANTYESCD and EGISDKYNDQSSSPAISASATGSGSVSGLADSNTGLS. Residues 461-479 are compositionally biased toward polar residues; that stretch reads SASNRMRSDSQKTANTYES. The stretch at 505-542 is one WD 5 repeat; it reads VGSDPICWLGFQEDCIMTSSLEGHIRTWDRPREGISDK. Over residues 547-564 the composition is skewed to low complexity; sequence SSSPAISASATGSGSVSG.

This sequence belongs to the WD repeat creC family. In terms of assembly, interacts with creB.

Component of the regulatory network controlling carbon source utilization through ubiquitination and deubiquitination involving creA, creB, creC, creD and acrB. Required to prevent the proteolysis of the CreB deubiquitinating enzyme in the absence of carbon catabolite repression. CreB deubiquitinating enzyme stabilized in a complex with the CreC leads to the expression of genes such as those in the proline and quinate pathways. The sequence is that of Probable catabolite repression protein creC (creC) from Aspergillus clavatus (strain ATCC 1007 / CBS 513.65 / DSM 816 / NCTC 3887 / NRRL 1 / QM 1276 / 107).